The following is a 296-amino-acid chain: NAD kinase (296 aa).

The active-site Proton acceptor is Asp-73. NAD(+)-binding positions include 73–74 (DG), Lys-78, 151–152 (NE), Arg-178, Asp-180, and 191–196 (TAHAMS).

The protein belongs to the NAD kinase family. It depends on a divalent metal cation as a cofactor.

It is found in the cytoplasm. The catalysed reaction is NAD(+) + ATP = ADP + NADP(+) + H(+). Functionally, involved in the regulation of the intracellular balance of NAD and NADP, and is a key enzyme in the biosynthesis of NADP. Catalyzes specifically the phosphorylation on 2'-hydroxyl of the adenosine moiety of NAD to yield NADP. This Francisella tularensis subsp. novicida (strain U112) protein is NAD kinase.